The following is a 372-amino-acid chain: GRASP65 homolog protein 1 (372 aa).

Met1 carries the N-acetylmethionine modification. 2 consecutive PDZ GRASP-type domains span residues 66–183 (SGLR…WTPL) and 188–276 (FTYH…YGFL). The GRASP stretch occupies residues 66–292 (SGLRIVWVDE…KHCPQQAQQQ (227 aa)). Ser155 bears the Phosphoserine mark. Residues 312-372 (VPSAFTAPPV…PPPQKQSSSD (61 aa)) form a disordered region.

In terms of assembly, homodimer. Interacts with BUG1 (via C-terminus), probably forming a heterooligomer consisting of a GRH1 dimer and a BUG1 dimer. Interacts with COPII coat components SEC23, SEC24, SFB2 and SFB3. Post-translationally, N-terminal acetylation; by N-terminal acetyltransferase NatC.

Its subcellular location is the cytoplasm. The protein resides in the golgi apparatus. The protein localises to the cis-Golgi network membrane. Involved in the spindle assembly checkpoint. Involved in ER to Golgi vesicle-mediated transport by either facilitating USO1-dependent and -independent tethering or increasing target accuracy of fusion events of COPII-coated vesicles. This chain is GRASP65 homolog protein 1 (GRH1), found in Saccharomyces cerevisiae (strain ATCC 204508 / S288c) (Baker's yeast).